We begin with the raw amino-acid sequence, 318 residues long: Bis(5'-nucleosyl)-tetraphosphatase, symmetrical (318 aa).

The interval 269-318 (PGREVTGPAPVARAPRRPRERLGRQRSRGNRGNAGNTAVPAKPPVDTPQD) is disordered. The span at 282 to 297 (APRRPRERLGRQRSRG) shows a compositional bias: basic residues. Pro residues predominate over residues 309 to 318 (AKPPVDTPQD).

This sequence belongs to the Ap4A hydrolase family.

It carries out the reaction P(1),P(4)-bis(5'-adenosyl) tetraphosphate + H2O = 2 ADP + 2 H(+). Functionally, hydrolyzes diadenosine 5',5'''-P1,P4-tetraphosphate to yield ADP. This is Bis(5'-nucleosyl)-tetraphosphatase, symmetrical from Xanthomonas oryzae pv. oryzae (strain PXO99A).